A 388-amino-acid polypeptide reads, in one-letter code: 8-amino-7-oxononanoate synthase (388 aa).

Arg20 is a substrate binding site. Residue 107–108 (GY) participates in pyridoxal 5'-phosphate binding. Substrate is bound at residue His132. Pyridoxal 5'-phosphate contacts are provided by Ser178, His206, and Thr237. The residue at position 240 (Lys240) is an N6-(pyridoxal phosphate)lysine. Thr356 is a substrate binding site.

This sequence belongs to the class-II pyridoxal-phosphate-dependent aminotransferase family. BioF subfamily. In terms of assembly, homodimer. Requires pyridoxal 5'-phosphate as cofactor.

The catalysed reaction is 6-carboxyhexanoyl-[ACP] + L-alanine + H(+) = (8S)-8-amino-7-oxononanoate + holo-[ACP] + CO2. It functions in the pathway cofactor biosynthesis; biotin biosynthesis. In terms of biological role, catalyzes the decarboxylative condensation of pimeloyl-[acyl-carrier protein] and L-alanine to produce 8-amino-7-oxononanoate (AON), [acyl-carrier protein], and carbon dioxide. The sequence is that of 8-amino-7-oxononanoate synthase from Herminiimonas arsenicoxydans.